The primary structure comprises 254 residues: 5-oxoprolinase subunit A (254 aa).

It belongs to the LamB/PxpA family. In terms of assembly, forms a complex composed of PxpA, PxpB and PxpC.

The catalysed reaction is 5-oxo-L-proline + ATP + 2 H2O = L-glutamate + ADP + phosphate + H(+). Catalyzes the cleavage of 5-oxoproline to form L-glutamate coupled to the hydrolysis of ATP to ADP and inorganic phosphate. This is 5-oxoprolinase subunit A from Bacillus mycoides (strain KBAB4) (Bacillus weihenstephanensis).